The sequence spans 152 residues: 3-hydroxyacyl-[acyl-carrier-protein] dehydratase FabZ (152 aa).

Histidine 54 is an active-site residue.

The protein belongs to the thioester dehydratase family. FabZ subfamily.

The protein resides in the cytoplasm. It carries out the reaction a (3R)-hydroxyacyl-[ACP] = a (2E)-enoyl-[ACP] + H2O. Involved in unsaturated fatty acids biosynthesis. Catalyzes the dehydration of short chain beta-hydroxyacyl-ACPs and long chain saturated and unsaturated beta-hydroxyacyl-ACPs. The protein is 3-hydroxyacyl-[acyl-carrier-protein] dehydratase FabZ of Buchnera aphidicola subsp. Schizaphis graminum (strain Sg).